The sequence spans 306 residues: MMNNKVSFTNSNNPTISLSAVIYFPPKFDETRQYQAIVLSHPGGGVKEQTAGTYAKKLAEKGFVTIAYDASYQGESGGEPRQLENPYIRTEDISAVIDYLTTLSYVDNTRIGAMGICAGAGYTANAAIQDRRIKAIGTVSAVNIGSIFRNGWENNVKSIDALPYVEAGSNARTSDISSGEYAIMPLAPMKESDAPNEELRQAWEYYHTPRAQYPTAPGYATLRSLNQIITYDAYHMAEVYLTQPTQIVAGSQAGSKWMSDDLYDRASSQDKRYHIVEGANHMDLYDGKAYVAEAISVLAPFFEETL.

This is an uncharacterized protein from Escherichia coli (strain K12).